A 309-amino-acid polypeptide reads, in one-letter code: Ribose-phosphate pyrophosphokinase (309 aa).

ATP contacts are provided by residues 37-39 (DGE) and 96-97 (RQ). Mg(2+) contacts are provided by histidine 130 and aspartate 169. Residue lysine 192 is part of the active site. D-ribose 5-phosphate contacts are provided by residues arginine 194, aspartate 218, and 222–226 (DTAGT).

It belongs to the ribose-phosphate pyrophosphokinase family. Class I subfamily. In terms of assembly, homohexamer. Requires Mg(2+) as cofactor.

It localises to the cytoplasm. The catalysed reaction is D-ribose 5-phosphate + ATP = 5-phospho-alpha-D-ribose 1-diphosphate + AMP + H(+). It participates in metabolic intermediate biosynthesis; 5-phospho-alpha-D-ribose 1-diphosphate biosynthesis; 5-phospho-alpha-D-ribose 1-diphosphate from D-ribose 5-phosphate (route I): step 1/1. In terms of biological role, involved in the biosynthesis of the central metabolite phospho-alpha-D-ribosyl-1-pyrophosphate (PRPP) via the transfer of pyrophosphoryl group from ATP to 1-hydroxyl of ribose-5-phosphate (Rib-5-P). This Campylobacter jejuni subsp. jejuni serotype O:2 (strain ATCC 700819 / NCTC 11168) protein is Ribose-phosphate pyrophosphokinase.